Consider the following 381-residue polypeptide: Dihydroorotate dehydrogenase (quinone) (381 aa).

Residues 74 to 78 and Thr98 each bind FMN; that span reads AGFDK. Lys78 provides a ligand contact to substrate. 123–127 is a binding site for substrate; that stretch reads NRMGF. Residues Asn152 and Asn185 each coordinate FMN. Asn185 serves as a coordination point for substrate. The Nucleophile role is filled by Ser188. Residue Asn190 coordinates substrate. FMN contacts are provided by Lys223 and Thr251. Residue 252–253 participates in substrate binding; the sequence is NT. FMN-binding positions include Gly289, Gly318, and 339–340; that span reads YT. The segment at 359–381 is disordered; sequence RSSPPSPDVTLPPENTPVGQIQA.

The protein belongs to the dihydroorotate dehydrogenase family. Type 2 subfamily. In terms of assembly, monomer. It depends on FMN as a cofactor.

It is found in the cell membrane. The enzyme catalyses (S)-dihydroorotate + a quinone = orotate + a quinol. Its pathway is pyrimidine metabolism; UMP biosynthesis via de novo pathway; orotate from (S)-dihydroorotate (quinone route): step 1/1. In terms of biological role, catalyzes the conversion of dihydroorotate to orotate with quinone as electron acceptor. This chain is Dihydroorotate dehydrogenase (quinone), found in Synechococcus sp. (strain JA-2-3B'a(2-13)) (Cyanobacteria bacterium Yellowstone B-Prime).